Here is a 227-residue protein sequence, read N- to C-terminus: Cytochrome c oxidase subunit 2 (227 aa).

Over 1-14 (MAYPFQLGLQDATS) the chain is Mitochondrial intermembrane. Residues 15-45 (PIMEELLHFHDHTLMIVFLISSLVLYIISLM) form a helical membrane-spanning segment. Residues 46–59 (LTTKLTHTSTMDAQ) are Mitochondrial matrix-facing. A helical membrane pass occupies residues 60–87 (EVETVWTILPAIILILIALPSLRILYMM). Residues 88 to 227 (DEINNPSLTV…YFEAWSALMV (140 aa)) are Mitochondrial intermembrane-facing. Cu cation is bound by residues H161, C196, E198, C200, H204, and M207. E198 provides a ligand contact to Mg(2+). A Phosphotyrosine modification is found at Y218.

The protein belongs to the cytochrome c oxidase subunit 2 family. Component of the cytochrome c oxidase (complex IV, CIV), a multisubunit enzyme composed of 14 subunits. The complex is composed of a catalytic core of 3 subunits MT-CO1, MT-CO2 and MT-CO3, encoded in the mitochondrial DNA, and 11 supernumerary subunits COX4I, COX5A, COX5B, COX6A, COX6B, COX6C, COX7A, COX7B, COX7C, COX8 and NDUFA4, which are encoded in the nuclear genome. The complex exists as a monomer or a dimer and forms supercomplexes (SCs) in the inner mitochondrial membrane with NADH-ubiquinone oxidoreductase (complex I, CI) and ubiquinol-cytochrome c oxidoreductase (cytochrome b-c1 complex, complex III, CIII), resulting in different assemblies (supercomplex SCI(1)III(2)IV(1) and megacomplex MCI(2)III(2)IV(2)). Found in a complex with TMEM177, COA6, COX18, COX20, SCO1 and SCO2. Interacts with TMEM177 in a COX20-dependent manner. Interacts with COX20. Interacts with COX16. Cu cation serves as cofactor.

The protein resides in the mitochondrion inner membrane. It carries out the reaction 4 Fe(II)-[cytochrome c] + O2 + 8 H(+)(in) = 4 Fe(III)-[cytochrome c] + 2 H2O + 4 H(+)(out). Component of the cytochrome c oxidase, the last enzyme in the mitochondrial electron transport chain which drives oxidative phosphorylation. The respiratory chain contains 3 multisubunit complexes succinate dehydrogenase (complex II, CII), ubiquinol-cytochrome c oxidoreductase (cytochrome b-c1 complex, complex III, CIII) and cytochrome c oxidase (complex IV, CIV), that cooperate to transfer electrons derived from NADH and succinate to molecular oxygen, creating an electrochemical gradient over the inner membrane that drives transmembrane transport and the ATP synthase. Cytochrome c oxidase is the component of the respiratory chain that catalyzes the reduction of oxygen to water. Electrons originating from reduced cytochrome c in the intermembrane space (IMS) are transferred via the dinuclear copper A center (CU(A)) of subunit 2 and heme A of subunit 1 to the active site in subunit 1, a binuclear center (BNC) formed by heme A3 and copper B (CU(B)). The BNC reduces molecular oxygen to 2 water molecules using 4 electrons from cytochrome c in the IMS and 4 protons from the mitochondrial matrix. In Cuon alpinus (Dhole), this protein is Cytochrome c oxidase subunit 2 (MT-CO2).